We begin with the raw amino-acid sequence, 332 residues long: Probable L-asparaginase (332 aa).

The Asparaginase/glutaminase domain occupies Pro6 to Tyr332. Catalysis depends on Thr16, which acts as the O-isoaspartyl threonine intermediate. Substrate contacts are provided by residues Ser62 and Thr95–Asp96.

The protein belongs to the asparaginase 1 family.

It localises to the cytoplasm. The enzyme catalyses L-asparagine + H2O = L-aspartate + NH4(+). The sequence is that of Probable L-asparaginase (ansA) from Helicobacter pylori (strain J99 / ATCC 700824) (Campylobacter pylori J99).